Reading from the N-terminus, the 627-residue chain is Pescadillo homolog (627 aa).

In terms of domain architecture, BRCT spans 321–414 (RLRTLFKGLK…QLLPTNKYFI (94 aa)). Disordered stretches follow at residues 436 to 471 (PEEK…AVDQ), 489 to 562 (YKKY…LQAR), and 596 to 627 (FEAG…KLGK). Phosphoserine is present on residues Ser-453 and Ser-457. 2 stretches are compositionally biased toward acidic residues: residues 453 to 471 (SDDD…AVDQ) and 498 to 521 (VNED…EELD). Residues 522 to 533 (EQAKRLKEEKQK) are compositionally biased toward basic and acidic residues. Over residues 540–549 (KVHKVNKRQL) the composition is skewed to basic residues. Basic and acidic residues-rich tracts occupy residues 550 to 559 (HKAEVDEHRL) and 596 to 605 (FEAGEKEARK). The span at 616–627 (AAAAAKASKLGK) shows a compositional bias: low complexity.

This sequence belongs to the pescadillo family.

The protein resides in the nucleus. It localises to the nucleolus. The protein localises to the nucleoplasm. Required for maturation of ribosomal RNAs and formation of the large ribosomal subunit. This Drosophila ananassae (Fruit fly) protein is Pescadillo homolog.